The chain runs to 409 residues: Z-DNA-binding protein 1 (409 aa).

Z-binding domains lie at 8–70 and 85–147; these read LGTG…SLGG and SAAQ…TIYR. Residues Lys17 and Lys43 each participate in a glycyl lysine isopeptide (Lys-Gly) (interchain with G-Cter in ubiquitin) cross-link. The segment at 59–87 is disordered; it reads SSPAPATWSLGGDGASGDGAPEIPEDSAA. 2 short sequence motifs (RIP homotypic interaction motif (RHIM)) span residues 183-207 and 241-265; these read NSLISISNSKAIQIGHGNVMSRQTI and LIHLNKSMLRRVQLGHGNEMNLERD. 2 disordered regions span residues 269–307 and 323–369; these read HPIFSFSSSPPESTTTADPETAFNMQTPEPGPHPEGGTT and GNNN…TPSD. Residues 270–290 show a composition bias toward low complexity; the sequence is PIFSFSSSPPESTTTADPETA. Residues 337–351 are compositionally biased toward basic and acidic residues; that stretch reads GTKESADSQELKEDT.

As to quaternary structure, homodimer. Interacts (via RIP homotypic interaction motif) with RIPK3; leading to RIPK3 activation and necroptosis; interaction is enhanced by CASP6. Interacts (via RIP homotypic interaction motif) with RIPK1. Component of the AIM2 PANoptosome complex, a multiprotein complex that drives inflammatory cell death (PANoptosis). Post-translationally, ubiquitinated; polyubiquitinated following influenza A virus (IAV) infection. In terms of processing, phosphorylated.

Its subcellular location is the cytoplasm. It is found in the nucleus. With respect to regulation, ZBP1-dependent necroptosis is normally inhibited by RIPK1: RIPK1 inhibits the ZBP1-induced activation of RIPK3 via FADD-mediated recruitment of CASP8, which cleaves RIPK1 and limits TNF-induced necroptosis. Its function is as follows. Key innate sensor that recognizes and binds Z-RNA structures, which are produced by a number of viruses, such as herpesvirus, orthomyxovirus or flavivirus, and triggers different forms of cell death. ZBP1 acts as an essential mediator of pyroptosis, necroptosis and apoptosis (PANoptosis), an integral part of host defense against pathogens, by activating RIPK3, caspase-8 (CASP8), and the NLRP3 inflammasome. Key activator of necroptosis, a programmed cell death process in response to death-inducing TNF-alpha family members, via its ability to bind Z-RNA: once activated upon Z-RNA-binding, ZBP1 interacts and stimulates RIPK3 kinase, which phosphorylates and activates MLKL, triggering execution of programmed necrosis. In addition to TNF-induced necroptosis, necroptosis can also take place in the nucleus in response to orthomyxoviruses infection: ZBP1 recognizes and binds Z-RNA structures that are produced in infected nuclei by orthomyxoviruses, such as the influenza A virus (IAV), leading to ZBP1 activation, RIPK3 stimulation and subsequent MLKL phosphorylation, triggering disruption of the nuclear envelope and leakage of cellular DNA into the cytosol. ZBP1-dependent cell death in response to IAV infection promotes interleukin-1 alpha (IL1A) induction in an NLRP3-inflammasome-independent manner: IL1A expression is required for the optimal interleukin-1 beta (IL1B) production, and together, these cytokines promote infiltration of inflammatory neutrophils to the lung, leading to the formation of neutrophil extracellular traps. In addition to its direct role in driving necroptosis via its ability to sense Z-RNAs, also involved in PANoptosis triggered in response to bacterial infection: component of the AIM2 PANoptosome complex, a multiprotein complex that triggers PANoptosis. Also acts as the apical sensor of fungal infection responsible for activating PANoptosis. Involved in CASP8-mediated cell death via its interaction with RIPK1 but independently of its ability to sense Z-RNAs. In some cell types, also able to restrict viral replication by promoting cell death-independent responses. In response to flavivirus infection in neurons, promotes a cell death-independent pathway that restricts viral replication: together with RIPK3, promotes a death-independent transcriptional program that modifies the cellular metabolism via up-regulation expression of the enzyme ACOD1/IRG1 and production of the metabolite itaconate. Itaconate inhibits the activity of succinate dehydrogenase, generating a metabolic state in neurons that suppresses replication of viral genomes. In Rattus norvegicus (Rat), this protein is Z-DNA-binding protein 1.